A 556-amino-acid chain; its full sequence is MYRLLSAVMARAATTGGCAWGCGRRAAHQRAGLPPLGPGWVGGLGLGLGLALGVKLAGGLRGASPAPPAAAPDPEALPQAEPLQAQEQPLAPWSPQTPAPPHTRHFARAIDSSRDLLHRIKDEVGAPGIVVGVSVDGKEVWSEGLGYADVENRVPCKPETVMRIASISKSLTMVAIAKLWEAGKLDLDIPVQHYVPEFPEKEYEGEKVSVTTRLLISHLSGIRHYEKDMKKVKEEKAYKALKMMKEMMESDQEKELKEKGGKSNEKNDFAKAKVEQDNETKGRNSKPCKKKNDFEQGELYLKEKFENSIESLRLFKNDPLFFKPGSQFLYSTFGYTLLAAIVERASGYKYLDYMQKIFHDLDMLTTVQEENEPVIYNRARFYVYNKKKRLVNTPYVDNSYKWAGGGFLSTVGDLLKFGNAMLYGYQVGLFKNANENLLPGYLKPETMLMIWTPVPNTEMSWDKEGKYAMAWGVVEKKQTYGSCRKQRHYASHTGGAVGASSVLLVLPEELDAEALNNKVPPRGIVVSIICNMQSVGLNSTALKIALEFDKDRSDIP.

A mitochondrion-targeting transit peptide spans 1–117 (MYRLLSAVMA…RAIDSSRDLL (117 aa)). Residue S166 is the Acyl-ester intermediate of the active site. Basic and acidic residues predominate over residues 249-282 (ESDQEKELKEKGGKSNEKNDFAKAKVEQDNETKG). The disordered stretch occupies residues 249–290 (ESDQEKELKEKGGKSNEKNDFAKAKVEQDNETKGRNSKPCKK). K290 and K291 each carry N6-succinyllysine. N6-acetyllysine occurs at positions 304 and 349.

The protein belongs to the peptidase S12 family.

The protein resides in the mitochondrion. Its function is as follows. Mitochondrial serine protease that acts as a regulator of mitochondrial lipid metabolism. Acts by decreasing protein levels of PISD, a mitochondrial enzyme that converts phosphatidylserine (PtdSer) to phosphatidylethanolamine (PtdEtn), thereby affecting mitochondrial lipid metabolism. It is unclear whether it acts directly by mediating proteolysis of PISD or by mediating proteolysis of another lipid metabolism protein. This is Serine beta-lactamase-like protein LACTB, mitochondrial from Bos taurus (Bovine).